Consider the following 122-residue polypeptide: Large ribosomal subunit protein bL12 (122 aa).

It belongs to the bacterial ribosomal protein bL12 family. Homodimer. Part of the ribosomal stalk of the 50S ribosomal subunit. Forms a multimeric L10(L12)X complex, where L10 forms an elongated spine to which 2 to 4 L12 dimers bind in a sequential fashion. Binds GTP-bound translation factors.

Its function is as follows. Forms part of the ribosomal stalk which helps the ribosome interact with GTP-bound translation factors. Is thus essential for accurate translation. The sequence is that of Large ribosomal subunit protein bL12 from Vibrio parahaemolyticus serotype O3:K6 (strain RIMD 2210633).